A 41-amino-acid chain; its full sequence is Chymotrypsin inhibitor (41 aa).

In terms of biological role, inhibits chymotrypsin. This chain is Chymotrypsin inhibitor, found in Eisenia hortensis (European nightcrawler).